Consider the following 317-residue polypeptide: Insulin-like growth factor-binding protein 2 (317 aa).

Positions 1–33 (MQPRLGGPALLLLPPLLLLLLLGAGGGDCGARA) are cleaved as a signal peptide. Residues 35-126 (VLFRCPPCTP…VHGEGTCEKH (92 aa)) enclose the IGFBP N-terminal domain. 6 disulfide bridges follow: Cys39–Cys76, Cys42–Cys78, Cys50–Cys79, Cys68–Cys82, Cys90–Cys103, and Cys97–Cys123. Disordered stretches follow at residues 125 to 151 (KHGD…GGQV) and 189 to 218 (EQHR…ARTP). A Thyroglobulin type-1 domain is found at 216 to 298 (RTPCQQELDQ…APTIRGDPEC (83 aa)). 3 disulfides stabilise this stretch: Cys219–Cys253, Cys264–Cys275, and Cys277–Cys298. The Cell attachment site motif lies at 293-295 (RGD).

In terms of assembly, interacts with IGF1. Interacts with IGF2. Interacts (via RGD motif) with integrin alpha5/ITGA5; this interaction induces cell migration, adhesion or apoptosis according to the context. Interacts with PTPRB; this interaction leads to PTPRB dimerization and inactivation. Cleaved by MMP9 leading to release of free IGF2 from IGFBP2-IGF2 complex, which contributes to enhance the motility and the growth of astrocytes. In terms of processing, O-glycosylated. As to expression, expressed in abundance in selected adult tissues, namely liver, kidney, adrenal, pituitary and choroid plexus.

The protein resides in the secreted. Functionally, multifunctional protein that plays a critical role in regulating the availability of IGFs such as IGF1 and IGF2 to their receptors and thereby regulates IGF-mediated cellular processes including proliferation, differentiation, and apoptosis in a cell-type specific manner. Functions coordinately with receptor protein tyrosine phosphatase beta/PTPRB and the IGF1 receptor to regulate IGF1-mediated signaling by stimulating the phosphorylation of PTEN leading to its inactivation and AKT1 activation. Plays a positive role in cell migration via interaction with integrin alpha5/ITGA5 through an RGD motif. Additionally, interaction with ITGA5/ITGB1 enhances the adhesion of endothelial progenitor cells to endothelial cells. Upon mitochondrial damage, facilitates apoptosis with ITGA5 of podocytes, and then activates the phosphorylation of focal adhesion kinase (FAK)-mediated mitochondrial injury. The protein is Insulin-like growth factor-binding protein 2 (IGFBP2) of Ovis aries (Sheep).